Reading from the N-terminus, the 276-residue chain is Diaminopimelate epimerase (276 aa).

3 residues coordinate substrate: N13, Q46, and N66. C75 functions as the Proton donor in the catalytic mechanism. Substrate-binding positions include 76 to 77 (GN), N159, N192, and 210 to 211 (ER). Catalysis depends on C219, which acts as the Proton acceptor. 220-221 (GT) lines the substrate pocket.

It belongs to the diaminopimelate epimerase family. In terms of assembly, homodimer.

The protein localises to the cytoplasm. The enzyme catalyses (2S,6S)-2,6-diaminopimelate = meso-2,6-diaminopimelate. It participates in amino-acid biosynthesis; L-lysine biosynthesis via DAP pathway; DL-2,6-diaminopimelate from LL-2,6-diaminopimelate: step 1/1. Functionally, catalyzes the stereoinversion of LL-2,6-diaminopimelate (L,L-DAP) to meso-diaminopimelate (meso-DAP), a precursor of L-lysine and an essential component of the bacterial peptidoglycan. The chain is Diaminopimelate epimerase from Pseudomonas fluorescens (strain Pf0-1).